The chain runs to 236 residues: Phosphoribosylaminoimidazole-succinocarboxamide synthase (236 aa).

This sequence belongs to the SAICAR synthetase family.

The catalysed reaction is 5-amino-1-(5-phospho-D-ribosyl)imidazole-4-carboxylate + L-aspartate + ATP = (2S)-2-[5-amino-1-(5-phospho-beta-D-ribosyl)imidazole-4-carboxamido]succinate + ADP + phosphate + 2 H(+). It functions in the pathway purine metabolism; IMP biosynthesis via de novo pathway; 5-amino-1-(5-phospho-D-ribosyl)imidazole-4-carboxamide from 5-amino-1-(5-phospho-D-ribosyl)imidazole-4-carboxylate: step 1/2. The chain is Phosphoribosylaminoimidazole-succinocarboxamide synthase from Hahella chejuensis (strain KCTC 2396).